We begin with the raw amino-acid sequence, 81 residues long: Delta-conotoxin-like Ac6.3 (81 aa).

Positions 1 to 22 are cleaved as a signal peptide; the sequence is MKLTCVMIVAVLFLTAWTFVTA. The propeptide occupies 23 to 51; sequence DDSRNGLENLSPKARHEMKNPEASKSNKR. Intrachain disulfides connect Cys-54–Cys-69, Cys-61–Cys-73, and Cys-68–Cys-78.

The protein belongs to the conotoxin O1 superfamily. In terms of tissue distribution, expressed by the venom duct.

It is found in the secreted. Its function is as follows. Delta-conotoxins bind to site 6 of voltage-gated sodium channels (Nav) and inhibit the inactivation process. The polypeptide is Delta-conotoxin-like Ac6.3 (Conus achatinus (Little frog cone)).